Reading from the N-terminus, the 284-residue chain is Bifunctional protein FolD (284 aa).

NADP(+) contacts are provided by residues 166-168 (GAS) and isoleucine 232.

The protein belongs to the tetrahydrofolate dehydrogenase/cyclohydrolase family. Homodimer.

The enzyme catalyses (6R)-5,10-methylene-5,6,7,8-tetrahydrofolate + NADP(+) = (6R)-5,10-methenyltetrahydrofolate + NADPH. It carries out the reaction (6R)-5,10-methenyltetrahydrofolate + H2O = (6R)-10-formyltetrahydrofolate + H(+). It participates in one-carbon metabolism; tetrahydrofolate interconversion. In terms of biological role, catalyzes the oxidation of 5,10-methylenetetrahydrofolate to 5,10-methenyltetrahydrofolate and then the hydrolysis of 5,10-methenyltetrahydrofolate to 10-formyltetrahydrofolate. The protein is Bifunctional protein FolD of Pseudomonas paraeruginosa (strain DSM 24068 / PA7) (Pseudomonas aeruginosa (strain PA7)).